The sequence spans 409 residues: Probable peptidoglycan glycosyltransferase FtsW (409 aa).

A run of 9 helical transmembrane segments spans residues 42–62, 72–92, 108–128, 135–155, 178–198, 213–233, 303–323, 337–357, and 368–388; these read LFTLAMALLAFGFVMVTSASL, PFHFAIRHGIYILISLAVMLA, LLLLGLIMLLMVLVVGYEVNG, VGPITFQAAEVAKLFFCIYMA, LLFIAAVLLLMQPDFGTVVVL, LWQFFAVFITCVLALILLIIV, FLGVLAVIATVLMLVWRALII, YLAYGIGIWFSIQAFVNIGVA, and LPLVSYGGNSLIISALAVGLL.

Belongs to the SEDS family. FtsW subfamily.

Its subcellular location is the cell inner membrane. It carries out the reaction [GlcNAc-(1-&gt;4)-Mur2Ac(oyl-L-Ala-gamma-D-Glu-L-Lys-D-Ala-D-Ala)](n)-di-trans,octa-cis-undecaprenyl diphosphate + beta-D-GlcNAc-(1-&gt;4)-Mur2Ac(oyl-L-Ala-gamma-D-Glu-L-Lys-D-Ala-D-Ala)-di-trans,octa-cis-undecaprenyl diphosphate = [GlcNAc-(1-&gt;4)-Mur2Ac(oyl-L-Ala-gamma-D-Glu-L-Lys-D-Ala-D-Ala)](n+1)-di-trans,octa-cis-undecaprenyl diphosphate + di-trans,octa-cis-undecaprenyl diphosphate + H(+). It participates in cell wall biogenesis; peptidoglycan biosynthesis. Its function is as follows. Peptidoglycan polymerase that is essential for cell division. The chain is Probable peptidoglycan glycosyltransferase FtsW from Idiomarina loihiensis (strain ATCC BAA-735 / DSM 15497 / L2-TR).